Reading from the N-terminus, the 287-residue chain is Protein REVEILLE 2 (287 aa).

The HTH myb-type domain occupies 31–85 (TITKQREKWTEAEHEKFVEALKLYGRAWRRIEEHVGTKTAVQIRSHAQKFFTKVA). The H-T-H motif DNA-binding region spans 58–81 (WRRIEEHVGTKTAVQIRSHAQKFF). Positions 134 to 177 (QDEDNRSPTSVLSAHGSDGLGSIGSNSPNSSSAELSSHTEESLS) are disordered. Low complexity predominate over residues 156-169 (IGSNSPNSSSAELS).

Its subcellular location is the nucleus. Its function is as follows. Positive regulator for cold-responsive gene expression and cold tolerance. Part of a regulatory feedback loop that controls a subset of the circadian outputs and modulates the central oscillator. Negatively self-regulates its own expression. This chain is Protein REVEILLE 2 (RVE2), found in Arabidopsis thaliana (Mouse-ear cress).